The sequence spans 120 residues: uncharacterized protein (120 aa).

This sequence to M.jannaschii MJ0361.

This is an uncharacterized protein from Methanocaldococcus jannaschii (strain ATCC 43067 / DSM 2661 / JAL-1 / JCM 10045 / NBRC 100440) (Methanococcus jannaschii).